Here is a 136-residue protein sequence, read N- to C-terminus: Large-conductance mechanosensitive channel (136 aa).

4 helical membrane passes run 9–29, 32–52, 54–74, and 79–99; these read AFAS…GAAF, IVSS…LGGV, FSDL…VVIA, and IQTV…LKAI.

Belongs to the MscL family. In terms of assembly, homopentamer.

Its subcellular location is the cell inner membrane. In terms of biological role, channel that opens in response to stretch forces in the membrane lipid bilayer. May participate in the regulation of osmotic pressure changes within the cell. The polypeptide is Large-conductance mechanosensitive channel (Vibrio cholerae serotype O1 (strain ATCC 39541 / Classical Ogawa 395 / O395)).